The primary structure comprises 307 residues: Methionyl-tRNA formyltransferase (307 aa).

Residue 108 to 111 (SLLP) participates in (6S)-5,6,7,8-tetrahydrofolate binding.

It belongs to the Fmt family.

The catalysed reaction is L-methionyl-tRNA(fMet) + (6R)-10-formyltetrahydrofolate = N-formyl-L-methionyl-tRNA(fMet) + (6S)-5,6,7,8-tetrahydrofolate + H(+). Functionally, attaches a formyl group to the free amino group of methionyl-tRNA(fMet). The formyl group appears to play a dual role in the initiator identity of N-formylmethionyl-tRNA by promoting its recognition by IF2 and preventing the misappropriation of this tRNA by the elongation apparatus. The sequence is that of Methionyl-tRNA formyltransferase from Xanthomonas axonopodis pv. citri (strain 306).